The chain runs to 272 residues: Centromere protein V-like protein 3 (272 aa).

Residues 1 to 17 (MGRVRNRATAQRRRRKR) are compositionally biased toward basic residues. Disordered stretches follow at residues 1–23 (MGRVRNRATAQRRRRKRPGDPPA) and 65–95 (RRAREAGSRDPLPSAPLPDPPAPAESPKELD). A compositionally biased stretch (pro residues) spans 77-88 (PSAPLPDPPAPA). The region spanning 133–246 (HTGGCHCGAV…EEVGGGDPGE (114 aa)) is the CENP-V/GFA domain. Zn(2+) is bound by residues Cys137, Cys139, Cys157, Cys159, Cys162, Cys201, and Cys204. Positions 240-272 (GGGDPGEEAAEEHKAIHKTSSQSAPACPREQEQ) are disordered.

This sequence belongs to the Gfa family. The cofactor is Zn(2+).

This is Centromere protein V-like protein 3 from Homo sapiens (Human).